An 872-amino-acid chain; its full sequence is DNA mismatch repair protein MutS (872 aa).

Position 622–629 (622–629) interacts with ATP; that stretch reads GPNMAGKS.

This sequence belongs to the DNA mismatch repair MutS family.

In terms of biological role, this protein is involved in the repair of mismatches in DNA. It is possible that it carries out the mismatch recognition step. This protein has a weak ATPase activity. The polypeptide is DNA mismatch repair protein MutS (Geotalea uraniireducens (strain Rf4) (Geobacter uraniireducens)).